Here is an 83-residue protein sequence, read N- to C-terminus: Cytochrome b559 subunit alpha (83 aa).

A helical transmembrane segment spans residues 21–35 (VIHSITIPSLFIAGW). His23 is a binding site for heme.

Belongs to the PsbE/PsbF family. In terms of assembly, heterodimer of an alpha subunit and a beta subunit. PSII is composed of 1 copy each of membrane proteins PsbA, PsbB, PsbC, PsbD, PsbE, PsbF, PsbH, PsbI, PsbJ, PsbK, PsbL, PsbM, PsbT, PsbX, PsbY, PsbZ, Psb30/Ycf12, at least 3 peripheral proteins of the oxygen-evolving complex and a large number of cofactors. It forms dimeric complexes. Requires heme b as cofactor.

Its subcellular location is the plastid. It localises to the chloroplast thylakoid membrane. This b-type cytochrome is tightly associated with the reaction center of photosystem II (PSII). PSII is a light-driven water:plastoquinone oxidoreductase that uses light energy to abstract electrons from H(2)O, generating O(2) and a proton gradient subsequently used for ATP formation. It consists of a core antenna complex that captures photons, and an electron transfer chain that converts photonic excitation into a charge separation. The protein is Cytochrome b559 subunit alpha of Daucus carota (Wild carrot).